A 373-amino-acid chain; its full sequence is Phospho-N-acetylmuramoyl-pentapeptide-transferase (373 aa).

The next 10 membrane-spanning stretches (helical) occupy residues L28–Y48, T72–A92, L94–W114, Y135–Q155, I177–I197, G212–S232, V252–H272, V276–M296, I301–V321, and Q350–L370.

This sequence belongs to the glycosyltransferase 4 family. MraY subfamily. The cofactor is Mg(2+).

The protein localises to the cell inner membrane. It catalyses the reaction UDP-N-acetyl-alpha-D-muramoyl-L-alanyl-gamma-D-glutamyl-meso-2,6-diaminopimeloyl-D-alanyl-D-alanine + di-trans,octa-cis-undecaprenyl phosphate = di-trans,octa-cis-undecaprenyl diphospho-N-acetyl-alpha-D-muramoyl-L-alanyl-D-glutamyl-meso-2,6-diaminopimeloyl-D-alanyl-D-alanine + UMP. The protein operates within cell wall biogenesis; peptidoglycan biosynthesis. In terms of biological role, catalyzes the initial step of the lipid cycle reactions in the biosynthesis of the cell wall peptidoglycan: transfers peptidoglycan precursor phospho-MurNAc-pentapeptide from UDP-MurNAc-pentapeptide onto the lipid carrier undecaprenyl phosphate, yielding undecaprenyl-pyrophosphoryl-MurNAc-pentapeptide, known as lipid I. This Psychrobacter sp. (strain PRwf-1) protein is Phospho-N-acetylmuramoyl-pentapeptide-transferase.